Reading from the N-terminus, the 187-residue chain is Segregation and condensation protein B (187 aa).

Belongs to the ScpB family. As to quaternary structure, homodimer. Homodimerization may be required to stabilize the binding of ScpA to the Smc head domains. Component of a cohesin-like complex composed of ScpA, ScpB and the Smc homodimer, in which ScpA and ScpB bind to the head domain of Smc. The presence of the three proteins is required for the association of the complex with DNA.

It is found in the cytoplasm. In terms of biological role, participates in chromosomal partition during cell division. May act via the formation of a condensin-like complex containing Smc and ScpA that pull DNA away from mid-cell into both cell halves. In Agathobacter rectalis (strain ATCC 33656 / DSM 3377 / JCM 17463 / KCTC 5835 / VPI 0990) (Eubacterium rectale), this protein is Segregation and condensation protein B.